A 279-amino-acid chain; its full sequence is Thermitase (279 aa).

Asp-5 is a binding site for Ca(2+). The Peptidase S8 domain maps to 12–277 (QYGPQKIQAP…KGRVNAYKAV (266 aa)). The Charge relay system role is filled by Asp-38. Ca(2+) is bound by residues Asp-47, Asp-57, Asp-60, Asp-62, Thr-64, and Gln-66. The active-site Charge relay system is His-71. Residues Val-82, Asn-85, Thr-87, and Ile-89 each coordinate Ca(2+). Residues Ala-173, Tyr-175, and Ala-178 each contribute to the Na(+) site. Ca(2+)-binding residues include Val-199 and Asp-201. Asp-201 is a binding site for Na(+). Catalysis depends on Ser-225, which acts as the Charge relay system.

It belongs to the peptidase S8 family. It depends on Ca(2+) as a cofactor. The cofactor is Na(+).

The protein localises to the secreted. The catalysed reaction is Hydrolysis of proteins, including collagen.. The chain is Thermitase from Thermoactinomyces vulgaris.